Consider the following 306-residue polypeptide: Oxygen-dependent coproporphyrinogen-III oxidase (306 aa).

A substrate-binding site is contributed by serine 93. Histidine 97 and histidine 107 together coordinate a divalent metal cation. The active-site Proton donor is histidine 107. 109–111 is a binding site for substrate; the sequence is NVR. A divalent metal cation contacts are provided by histidine 146 and histidine 176. The segment at 241–276 is important for dimerization; the sequence is YVEYNLVYDRGTLFGLQSGGRTESILMSLPPQVAWG. 259–261 contributes to the substrate binding site; sequence GGR.

The protein belongs to the aerobic coproporphyrinogen-III oxidase family. In terms of assembly, homodimer. It depends on a divalent metal cation as a cofactor.

The protein resides in the cytoplasm. It carries out the reaction coproporphyrinogen III + O2 + 2 H(+) = protoporphyrinogen IX + 2 CO2 + 2 H2O. It functions in the pathway porphyrin-containing compound metabolism; protoporphyrin-IX biosynthesis; protoporphyrinogen-IX from coproporphyrinogen-III (O2 route): step 1/1. In terms of biological role, involved in the heme biosynthesis. Catalyzes the aerobic oxidative decarboxylation of propionate groups of rings A and B of coproporphyrinogen-III to yield the vinyl groups in protoporphyrinogen-IX. This chain is Oxygen-dependent coproporphyrinogen-III oxidase, found in Stutzerimonas stutzeri (strain A1501) (Pseudomonas stutzeri).